The chain runs to 154 residues: Anaerobic ribonucleoside-triphosphate reductase-activating protein (154 aa).

[4Fe-4S] cluster is bound by residues Cys26, Cys30, and Cys33. S-adenosyl-L-methionine is bound by residues 32 to 34 and Gly74; that span reads GCY.

This sequence belongs to the organic radical-activating enzymes family. As to quaternary structure, forms a tetramer composed of two NrdD and two NrdG subunits. [4Fe-4S] cluster is required as a cofactor.

The protein localises to the cytoplasm. The enzyme catalyses glycyl-[protein] + reduced [flavodoxin] + S-adenosyl-L-methionine = glycin-2-yl radical-[protein] + semiquinone [flavodoxin] + 5'-deoxyadenosine + L-methionine + H(+). Activation of anaerobic ribonucleoside-triphosphate reductase under anaerobic conditions by generation of an organic free radical, using S-adenosylmethionine and reduced flavodoxin as cosubstrates to produce 5'-deoxy-adenosine. The polypeptide is Anaerobic ribonucleoside-triphosphate reductase-activating protein (nrdG) (Salmonella typhi).